The primary structure comprises 480 residues: Pyruvate kinase (480 aa).

Arg36 contacts substrate. K(+)-binding residues include Asn38, Ser40, and Asp70. Position 38–41 (38–41 (NFSH)) interacts with ATP. ATP contacts are provided by Arg77 and Lys160. Residue Glu225 participates in Mg(2+) binding. Gly251, Asp252, and Thr284 together coordinate substrate. Asp252 contacts Mg(2+).

It belongs to the pyruvate kinase family. In terms of assembly, homotetramer. The cofactor is Mg(2+). Requires K(+) as cofactor.

It carries out the reaction pyruvate + ATP = phosphoenolpyruvate + ADP + H(+). Its pathway is carbohydrate degradation; glycolysis; pyruvate from D-glyceraldehyde 3-phosphate: step 5/5. With respect to regulation, allosterically activated by AMP and by several sugar phosphates. Belongs to type II PK. In Buchnera aphidicola subsp. Acyrthosiphon pisum (strain APS) (Acyrthosiphon pisum symbiotic bacterium), this protein is Pyruvate kinase (pykA).